The primary structure comprises 1188 residues: F-box only protein 38 (1188 aa).

The 46-residue stretch at 30–75 (MNQLSHEVLCHIFRYLPLQDIMCMECLSRKLKEAVTLYLRVVRVVD) folds into the F-box domain. Residues 59–119 (KLKEAVTLYL…LHPRYLERRR (61 aa)) form an interaction with KLF7 region. 3 short sequence motifs (nuclear export signal) span residues 194–201 (LHLVGVNV), 307–316 (LEVDLGYLII), and 451–460 (LLPSLEFISL). A disordered region spans residues 487-526 (ALVSNQNSNNDDNNAQNNNANIHDNNHHHPDDSDEENDFR). Residues 491–509 (NQNSNNDDNNAQNNNANIH) are compositionally biased toward low complexity. Position 591 is a phosphothreonine (T591). Residues S598, S600, and S606 each carry the phosphoserine modification. Disordered stretches follow at residues 620-666 (RRYS…FPLE), 685-766 (MKAA…MEEG), and 787-909 (RTSR…STSD). Composition is skewed to basic and acidic residues over residues 621 to 630 (RYSEREEKTG) and 685 to 699 (MKAA…KNKD). The span at 703–740 (SCSSTTASTVGNSSSHNTASQSPDFVRTVNSGGSSEPS) shows a compositional bias: polar residues. Phosphoserine is present on residues S736 and S740. Basic and acidic residues predominate over residues 787–798 (RTSRCSDEERPS). A compositionally biased stretch (polar residues) spans 849–861 (SSQPESCDVQSNE). The segment covering 889 to 900 (TKPRHAMKRKRT) has biased composition (basic residues). The Nuclear localization signal motif lies at 896 to 899 (KRKR).

As to quaternary structure, part of the SCF (SKP1-CUL1-F-box) E3 ubiquitin-protein ligase complex SCF(FBXO38) composed of CUL1, SKP1, RBX1 and FBXO38. Interacts with KLF7. Interacts with PDCD1/PD-1.

It is found in the cytoplasm. The protein resides in the cytosol. The protein localises to the nucleus. It participates in protein modification; protein ubiquitination. Substrate recognition component of a SCF (SKP1-CUL1-F-box protein) E3 ubiquitin-protein ligase complex which mediates the ubiquitination and subsequent proteasomal degradation of PDCD1/PD-1, thereby regulating T-cells-mediated immunity. Required for anti-tumor activity of T-cells by promoting the degradation of PDCD1/PD-1; the PDCD1-mediated inhibitory pathway being exploited by tumors to attenuate anti-tumor immunity and facilitate tumor survival. May indirectly stimulate the activity of transcription factor KLF7, a regulator of neuronal differentiation, without promoting KLF7 ubiquitination. The sequence is that of F-box only protein 38 from Homo sapiens (Human).